We begin with the raw amino-acid sequence, 149 residues long: Glutamyl-tRNA(Gln) amidotransferase subunit C, mitochondrial (149 aa).

The N-terminal 25 residues, 1–25 (MNHLHRLFRITQVDRPVLLAITRRL), are a transit peptide targeting the mitochondrion.

It belongs to the GatC family. In terms of assembly, subunit of the heterotrimeric GatCAB amidotransferase (AdT) complex, composed of A, B and C subunits.

The protein resides in the mitochondrion. The enzyme catalyses L-glutamyl-tRNA(Gln) + L-glutamine + ATP + H2O = L-glutaminyl-tRNA(Gln) + L-glutamate + ADP + phosphate + H(+). In terms of biological role, allows the formation of correctly charged Gln-tRNA(Gln) through the transamidation of misacylated Glu-tRNA(Gln) in the mitochondria. The reaction takes place in the presence of glutamine and ATP through an activated gamma-phospho-Glu-tRNA(Gln). This is Glutamyl-tRNA(Gln) amidotransferase subunit C, mitochondrial from Branchiostoma floridae (Florida lancelet).